The sequence spans 94 residues: Mitochondrial import receptor subunit TOM9-1 (94 aa).

Residues Met1–Lys48 lie on the Cytoplasmic side of the membrane. A helical transmembrane segment spans residues Ala49–Leu66. The Mitochondrial intermembrane portion of the chain corresponds to Glu67 to Leu94.

This sequence belongs to the Tom22 family. Forms part of the preprotein translocase complex of the outer mitochondrial membrane (TOM complex) which consists of at least 6 different proteins (TOM5, TOM6, TOM7, TOM20, TOM22/TOM9 and TOM40). Expressed in roots, flowers, young cotyledons and leaves.

The protein localises to the mitochondrion outer membrane. Its function is as follows. Central component of the receptor complex responsible for the recognition and translocation of cytosolically synthesized mitochondrial preproteins. Together with TOM20 functions as the transit peptide receptor at the surface of the mitochondrion outer membrane and facilitates the movement of preproteins into the translocation pore. The protein is Mitochondrial import receptor subunit TOM9-1 (TOM9-1) of Arabidopsis thaliana (Mouse-ear cress).